Consider the following 603-residue polypeptide: Laccase 1 (603 aa).

Positions 1–20 (MSRFARLLLIVALFFTNAWA) are cleaved as a signal peptide. Plastocyanin-like domains follow at residues 66 to 108 (QRPI…IHIR) and 159 to 349 (LVVS…MRIP). Histidine 90 and histidine 92 together coordinate Cu cation. Residues asparagine 246, asparagine 269, asparagine 434, and asparagine 474 are each glycosylated (N-linked (GlcNAc...) asparagine). The 129-residue stretch at 460–588 (TRDTENDGLV…GGMGIAILDG (129 aa)) folds into the Plastocyanin-like 3 domain. Cu cation contacts are provided by histidine 496, histidine 499, and histidine 501. The N-linked (GlcNAc...) asparagine glycan is linked to asparagine 516. Positions 570, 571, 572, and 576 each coordinate Cu cation.

Belongs to the multicopper oxidase family. Requires Cu cation as cofactor.

It is found in the cell surface. It functions in the pathway pigment biosynthesis. In terms of biological role, laccase; part of the Pks1 gene cluster that mediates the biosynthesis of an anthraquinone derivative pigment that contributes to conidial pigmentation that provides protection from UV radiation, heat and cold stress. The polyketide synthase Pks1 produces 1-acetyl-2,4,6,8-tetrahydroxy-9,10-anthraquinone though condensation of acetyl-CoA with malonyl-CoA. The dehydratase EthD and the laccase Mlac1 further convert the anthraquinone derivative into the final conidial pigment. The sequence is that of Laccase 1 from Metarhizium anisopliae (Entomophthora anisopliae).